A 71-amino-acid chain; its full sequence is Large ribosomal subunit protein uL29 (71 aa).

This sequence belongs to the universal ribosomal protein uL29 family. In terms of assembly, part of the 50S ribosomal subunit. Interacts with protein L23.

In terms of biological role, stabilizes the tertiary rRNA structure within the 23S rRNA domain (domain I) to which it binds. Located at the polypeptide exit tunnel on the outside of the subunit. In Haloarcula marismortui (strain ATCC 43049 / DSM 3752 / JCM 8966 / VKM B-1809) (Halobacterium marismortui), this protein is Large ribosomal subunit protein uL29 (rpl29).